The sequence spans 1063 residues: Retinoblastoma-like protein 1 (1063 aa).

Phosphothreonine is present on residues Thr332, Thr369, and Thr385. The domain A stretch occupies residues Val383–Arg584. Positions Val383–Tyr944 are pocket; binds T and E1A. A spacer region spans residues Val585–Ser779. Phosphoserine occurs at positions 640, 650, 748, and 761. The interval Lys780 to Tyr944 is domain B. Phosphoserine occurs at positions 959, 970, and 983. Phosphothreonine is present on Thr992. A phosphoserine mark is found at Ser1004 and Ser1036.

Belongs to the retinoblastoma protein (RB) family. As to quaternary structure, component of the DREAM complex (also named LINC complex) at least composed of E2F4, E2F5, LIN9, LIN37, LIN52, LIN54, MYBL1, MYBL2, RBL1, RBL2, RBBP4, TFDP1 and TFDP2. The complex exists in quiescent cells where it represses cell cycle-dependent genes. It dissociates in S phase when LIN9, LIN37, LIN52 and LIN54 form a subcomplex that binds to MYBL2. Interacts with AATF. Interacts with KDM5A. Interacts with KMT5B and KMT5C. Interacts with USP4. Interacts with RBBP9. In terms of processing, cell-cycle arrest properties are inactivated by phosphorylation on Thr-332, Ser-640, Ser-959 and Ser-970 by CDK4. Highly expressed in fetal heart and liver. Expressed at low levels in all other fetal tissues except skeletal muscle. High levels in neonatal spleen and thymus with low levels in other tissues. In adult, highly expressed in testis. Barely detectable in other tissues.

It is found in the nucleus. Key regulator of entry into cell division. Directly involved in heterochromatin formation by maintaining overall chromatin structure and, in particular, that of constitutive heterochromatin by stabilizing histone methylation. Recruits and targets histone methyltransferases KMT5B and KMT5C, leading to epigenetic transcriptional repression. Controls histone H4 'Lys-20' trimethylation. Probably acts as a transcription repressor by recruiting chromatin-modifying enzymes to promoters. Potent inhibitor of E2F-mediated trans-activation. May act as a tumor suppressor. This Mus musculus (Mouse) protein is Retinoblastoma-like protein 1 (Rbl1).